The following is a 469-amino-acid chain: MSAPRTLYDKIWDDHVVNRDPDGTCLLYIDRHLVHEVTSPQAFEGLRIAGRPVHSPTRTLAVVDHNVPTTADRLEGIKNEESRIQVEALAQNAKEFGVEYYSERDKRQGIVHIVGPEQGFTLPGMTIVCGDSHTSTHGAFGALAHGIGTSEVEHVLATQTLIQKKAKNMLVRVDGKLPESVTAKDIILAIIGEIGTAGGTGHVIEFAGEAIRSLSMEGRMTVCNMTIEGGARAGLIAPDETTFDYIKDKPRAPKGETLEQAIAYWKTLKSDEGAHYDKVVILDAANLPPIVSWGSSPEDVTSVEGIVPNPDDIEEENKRTSKWRALDYMGLKPGTRITDIAIDRVFIGSCTNGRIEDLRAAAKIVDGRKVASTVSAMIVPGSGLVKEQAEKEGLDKIFLDAGFEWREPGCSMCLAMNDDRLKPGERCASTSNRNFEGRQGYKSRTHLVSPAMAAAAAIAGHFVDVREWQ.

The [4Fe-4S] cluster site is built by Cys350, Cys410, and Cys413.

The protein belongs to the aconitase/IPM isomerase family. LeuC type 1 subfamily. In terms of assembly, heterodimer of LeuC and LeuD. Requires [4Fe-4S] cluster as cofactor.

It carries out the reaction (2R,3S)-3-isopropylmalate = (2S)-2-isopropylmalate. Its pathway is amino-acid biosynthesis; L-leucine biosynthesis; L-leucine from 3-methyl-2-oxobutanoate: step 2/4. In terms of biological role, catalyzes the isomerization between 2-isopropylmalate and 3-isopropylmalate, via the formation of 2-isopropylmaleate. This Agrobacterium fabrum (strain C58 / ATCC 33970) (Agrobacterium tumefaciens (strain C58)) protein is 3-isopropylmalate dehydratase large subunit.